The primary structure comprises 368 residues: WD repeat-containing protein wdr-5.1 (368 aa).

The disordered stretch occupies residues 1–64 (MDPAQNQPNT…APTTSQESTI (64 aa)). Residues 16 to 42 (PAVEEAQGVNNSEAEAPAPAALSSVSP) are compositionally biased toward low complexity. WD repeat units follow at residues 77–116 (GHTK…CERT), 119–158 (GHKL…MAKT), 161–200 (GHTN…CVKT), 203–242 (AHSD…CVKT), 246–285 (DENP…TLKQ), 288–330 (GHEN…VVQS), and 333–368 (GHTQ…RSDS).

This is WD repeat-containing protein wdr-5.1 from Caenorhabditis briggsae.